A 439-amino-acid polypeptide reads, in one-letter code: Glutamate-1-semialdehyde 2,1-aminomutase (439 aa).

Lys-270 carries the post-translational modification N6-(pyridoxal phosphate)lysine.

This sequence belongs to the class-III pyridoxal-phosphate-dependent aminotransferase family. HemL subfamily. As to quaternary structure, homodimer. It depends on pyridoxal 5'-phosphate as a cofactor.

The protein localises to the cytoplasm. It carries out the reaction (S)-4-amino-5-oxopentanoate = 5-aminolevulinate. It functions in the pathway porphyrin-containing compound metabolism; protoporphyrin-IX biosynthesis; 5-aminolevulinate from L-glutamyl-tRNA(Glu): step 2/2. The polypeptide is Glutamate-1-semialdehyde 2,1-aminomutase (Kocuria rhizophila (strain ATCC 9341 / DSM 348 / NBRC 103217 / DC2201)).